The following is a 242-amino-acid chain: Orotidine 5'-phosphate decarboxylase (242 aa).

Residues D16, K37, 64–73 (DLKFHDIPNT), T128, R190, Q199, G219, and R220 each bind substrate. K66 (proton donor) is an active-site residue.

This sequence belongs to the OMP decarboxylase family. Type 1 subfamily. In terms of assembly, homodimer.

It catalyses the reaction orotidine 5'-phosphate + H(+) = UMP + CO2. It functions in the pathway pyrimidine metabolism; UMP biosynthesis via de novo pathway; UMP from orotate: step 2/2. Functionally, catalyzes the decarboxylation of orotidine 5'-monophosphate (OMP) to uridine 5'-monophosphate (UMP). This Prochlorococcus marinus (strain MIT 9215) protein is Orotidine 5'-phosphate decarboxylase.